The following is a 215-amino-acid chain: Protein Syd (215 aa).

This sequence belongs to the Syd family.

The protein localises to the cell inner membrane. In terms of biological role, interacts with the SecY protein in vivo. May bind preferentially to an uncomplexed state of SecY, thus functioning either as a chelating agent for excess SecY in the cell or as a regulatory factor that negatively controls the translocase function. This is Protein Syd from Shewanella amazonensis (strain ATCC BAA-1098 / SB2B).